The sequence spans 423 residues: Histidinol dehydrogenase (423 aa).

Residues Tyr116, Gln177, and Asn200 each contribute to the NAD(+) site. Ser223, Gln245, and His248 together coordinate substrate. Gln245 and His248 together coordinate Zn(2+). Active-site proton acceptor residues include Glu313 and His314. The substrate site is built by His314, Asp347, Glu401, and His406. Position 347 (Asp347) interacts with Zn(2+). Residue His406 participates in Zn(2+) binding.

This sequence belongs to the histidinol dehydrogenase family. It depends on Zn(2+) as a cofactor.

The catalysed reaction is L-histidinol + 2 NAD(+) + H2O = L-histidine + 2 NADH + 3 H(+). It participates in amino-acid biosynthesis; L-histidine biosynthesis; L-histidine from 5-phospho-alpha-D-ribose 1-diphosphate: step 9/9. Its function is as follows. Catalyzes the sequential NAD-dependent oxidations of L-histidinol to L-histidinaldehyde and then to L-histidine. This Staphylococcus saprophyticus subsp. saprophyticus (strain ATCC 15305 / DSM 20229 / NCIMB 8711 / NCTC 7292 / S-41) protein is Histidinol dehydrogenase.